A 68-amino-acid polypeptide reads, in one-letter code: Large ribosomal subunit protein bL28 (68 aa).

Residues 1-30 (MAKICDHCGKKPQSGNNVSHANNKSKRRFE) form a disordered region. The span at 13 to 22 (QSGNNVSHAN) shows a compositional bias: polar residues.

This sequence belongs to the bacterial ribosomal protein bL28 family.

The chain is Large ribosomal subunit protein bL28 from Solidesulfovibrio magneticus (strain ATCC 700980 / DSM 13731 / RS-1) (Desulfovibrio magneticus).